A 204-amino-acid chain; its full sequence is WW domain-containing protein C11B10.08 (204 aa).

The WW domain occupies 7 to 43 (EGLPNGWVAQWDERYKCYFYVNESDPKAKPQWECPVR). The segment at 32 to 117 (PKAKPQWECP…GYPQQPYYYP (86 aa)) is disordered. Composition is skewed to low complexity over residues 66-100 (YSNSAAPATPAASASSAAPAPAPAASQNRAYGAAP) and 108-117 (GYPQQPYYYP).

The protein resides in the cytoplasm. The protein localises to the nucleus. This is WW domain-containing protein C11B10.08 from Schizosaccharomyces pombe (strain 972 / ATCC 24843) (Fission yeast).